The primary structure comprises 1807 residues: Vitellogenin-2 (1807 aa).

The N-terminal stretch at 1–16 is a signal peptide; sequence MWFPVTLLFLAGVAVA. The region spanning 24–819 is the Vitellogenin domain; the sequence is WETGNEYQYS…LIPKYVYVGV (796 aa). A disulfide bridge links cysteine 180 with cysteine 224. Residues 334–402 form a disordered region; it reads SDSDNRRVRH…SSSSSSEEEN (69 aa). The span at 346-397 shows a compositional bias: low complexity; that stretch reads VSQNSEQENSSESSKSSSQSSSSSSSASSSSSSSSSSSSSSSSSSSSSSSSS. 7 N-linked (GlcNAc...) asparagine glycosylation sites follow: asparagine 354, asparagine 579, asparagine 635, asparagine 1181, asparagine 1304, asparagine 1373, and asparagine 1506. Residues 1448 to 1636 enclose the VWFD domain; that stretch reads QSCTLDKDKV…TYAMTQENCQ (189 aa). 2 cysteine pairs are disulfide-bonded: cysteine 1450-cysteine 1599 and cysteine 1472-cysteine 1635. Disordered regions lie at residues 1635-1655 and 1684-1723; these read CQGP…HEFP and NRNK…KKHN. The N-linked (GlcNAc...) asparagine glycan is linked to asparagine 1693. Residues 1700 to 1714 show a composition bias toward polar residues; it reads KKQYQANSQESGSSE.

The protein resides in the secreted. Precursor of the egg-yolk proteins that are sources of nutrients during embryonic development. The sequence is that of Vitellogenin-2 from Solenopsis invicta (Red imported fire ant).